We begin with the raw amino-acid sequence, 1026 residues long: Phosphoenolpyruvate carboxylase (1026 aa).

Residues histidine 199 and lysine 672 contribute to the active site.

This sequence belongs to the PEPCase type 1 family. Mg(2+) serves as cofactor.

The catalysed reaction is oxaloacetate + phosphate = phosphoenolpyruvate + hydrogencarbonate. Functionally, forms oxaloacetate, a four-carbon dicarboxylic acid source for the tricarboxylic acid cycle. The polypeptide is Phosphoenolpyruvate carboxylase (ppc) (Nostoc sp. (strain PCC 7120 / SAG 25.82 / UTEX 2576)).